The following is a 357-amino-acid chain: Peptide chain release factor 1 (357 aa).

Gln232 is subject to N5-methylglutamine. Basic and acidic residues predominate over residues 282–291 (KQRAEQEAAR). The disordered stretch occupies residues 282–302 (KQRAEQEAARRSQVGTGDRSE).

The protein belongs to the prokaryotic/mitochondrial release factor family. Methylated by PrmC. Methylation increases the termination efficiency of RF1.

The protein resides in the cytoplasm. Peptide chain release factor 1 directs the termination of translation in response to the peptide chain termination codons UAG and UAA. This chain is Peptide chain release factor 1, found in Solidesulfovibrio magneticus (strain ATCC 700980 / DSM 13731 / RS-1) (Desulfovibrio magneticus).